The primary structure comprises 277 residues: Polyamine aminopropyltransferase (277 aa).

The 234-residue stretch at glutamate 2–lysine 235 folds into the PABS domain. Glutamine 31 contacts S-methyl-5'-thioadenosine. The spermidine site is built by histidine 62 and aspartate 86. Residues glutamate 106 and aspartate 137–glycine 138 each bind S-methyl-5'-thioadenosine. Aspartate 155 serves as the catalytic Proton acceptor. Aspartate 155 to aspartate 158 contacts spermidine. Position 162 (proline 162) interacts with S-methyl-5'-thioadenosine.

The protein belongs to the spermidine/spermine synthase family. In terms of assembly, homodimer or homotetramer.

Its subcellular location is the cytoplasm. The catalysed reaction is S-adenosyl 3-(methylsulfanyl)propylamine + putrescine = S-methyl-5'-thioadenosine + spermidine + H(+). It functions in the pathway amine and polyamine biosynthesis; spermidine biosynthesis; spermidine from putrescine: step 1/1. Functionally, catalyzes the irreversible transfer of a propylamine group from the amino donor S-adenosylmethioninamine (decarboxy-AdoMet) to putrescine (1,4-diaminobutane) to yield spermidine. The sequence is that of Polyamine aminopropyltransferase from Thermoanaerobacter pseudethanolicus (strain ATCC 33223 / 39E) (Clostridium thermohydrosulfuricum).